The following is a 404-amino-acid chain: Acyl-[acyl-carrier-protein] desaturase 7, chloroplastic (404 aa).

The transit peptide at 1-39 (MAASATTSTLAVTMFGYPNRNCHLKPPATATLRFWRSAA) directs the protein to the chloroplast. Residues glutamate 138, glutamate 176, histidine 179, glutamate 229, glutamate 262, and histidine 265 each coordinate Fe cation.

The protein belongs to the fatty acid desaturase type 2 family. As to quaternary structure, homodimer. Requires Fe(2+) as cofactor.

The protein resides in the plastid. It is found in the chloroplast. It functions in the pathway lipid metabolism; fatty acid metabolism. Introduces a cis double bond in the acyl chain of an acyl-[acyl-carrier protein]. The polypeptide is Acyl-[acyl-carrier-protein] desaturase 7, chloroplastic (Oryza sativa subsp. indica (Rice)).